The chain runs to 206 residues: RNA-binding protein with multiple splicing 2 (206 aa).

An N-acetylserine modification is found at Ser2. The region spanning 25 to 102 is the RRM domain; sequence RTLFVSGLPV…QTLRLEFAKA (78 aa). An important for homodimerization region spans residues 35-45; that stretch reads DIKPRELYLLF.

As to quaternary structure, homodimer. Interacts with EEF2.

It localises to the cytoplasm. Its subcellular location is the nucleus. The protein localises to the stress granule. RNA-binding protein involved in the regulation of smooth muscle cell differentiation and proliferation in the gastrointestinal system. Binds NOG mRNA, the major inhibitor of the bone morphogenetic protein (BMP) pathway. Mediates an increase of NOG mRNA levels, thereby contributing to the negative regulation of BMP signaling pathway and promoting reversible dedifferentiation and proliferation of smooth muscle cells. Acts as a pre-mRNA alternative splicing regulator. Mediates ACTN1 and FLNB alternative splicing. Likely binds to mRNA tandem CAC trinucleotide or CA dinucleotide motifs. The polypeptide is RNA-binding protein with multiple splicing 2 (Rbpms2) (Mus musculus (Mouse)).